The sequence spans 356 residues: Phenylalanine--tRNA ligase alpha subunit (356 aa).

Glu258 contributes to the Mg(2+) binding site.

The protein belongs to the class-II aminoacyl-tRNA synthetase family. Phe-tRNA synthetase alpha subunit type 1 subfamily. In terms of assembly, tetramer of two alpha and two beta subunits. It depends on Mg(2+) as a cofactor.

It is found in the cytoplasm. The catalysed reaction is tRNA(Phe) + L-phenylalanine + ATP = L-phenylalanyl-tRNA(Phe) + AMP + diphosphate + H(+). This is Phenylalanine--tRNA ligase alpha subunit from Macrococcus caseolyticus (strain JCSC5402) (Macrococcoides caseolyticum).